The primary structure comprises 43 residues: Protein PsbN (43 aa).

Residues 5 to 27 form a helical membrane-spanning segment; sequence TLVAIFISCLLVSFTGYAPYTAS.

Belongs to the PsbN family.

It is found in the plastid. The protein resides in the chloroplast thylakoid membrane. Its function is as follows. May play a role in photosystem I and II biogenesis. The protein is Protein PsbN of Anthoceros angustus (Hornwort).